The primary structure comprises 113 residues: UPF0342 protein SpyM3_0545 (113 aa).

Belongs to the UPF0342 family.

The protein is UPF0342 protein SpyM3_0545 of Streptococcus pyogenes serotype M3 (strain ATCC BAA-595 / MGAS315).